The primary structure comprises 87 residues: RNA-binding protein Hfq (87 aa).

Positions 9–68 (DPFLNALRRERIPVSIFLVNGIKLQGKIQSFDQFVILLENTVNQMVYKHAISTVVPARAV) constitute a Sm domain.

This sequence belongs to the Hfq family. Homohexamer.

RNA chaperone that binds small regulatory RNA (sRNAs) and mRNAs to facilitate mRNA translational regulation in response to envelope stress, environmental stress and changes in metabolite concentrations. Also binds with high specificity to tRNAs. The chain is RNA-binding protein Hfq from Pseudoalteromonas translucida (strain TAC 125).